The following is a 452-amino-acid chain: Multifunctional glycoside hydrolase (452 aa).

The substrate site is built by Gln-17, His-118, and Asn-162. The active-site Proton donor is the Glu-163. Residue Tyr-303 participates in substrate binding. Glu-361 acts as the Nucleophile in catalysis. Residues Trp-407 and 414–415 (EW) each bind substrate.

Belongs to the glycosyl hydrolase 1 family. Monomer. Homotrimer.

It catalyses the reaction Hydrolysis of terminal, non-reducing beta-D-glucosyl residues with release of beta-D-glucose.. The catalysed reaction is Hydrolysis of terminal non-reducing beta-D-galactose residues in beta-D-galactosides.. It carries out the reaction Hydrolysis of (1-&gt;4)-beta-D-xylans, to remove successive D-xylose residues from the non-reducing termini.. The enzyme catalyses Hydrolysis of (1-&gt;4)-linkages in (1-&gt;4)-beta-D-glucans, to remove successive glucose units.. It catalyses the reaction Hydrolysis of (1-&gt;4)-beta-D-glucosidic linkages in cellulose and cellotetraose, releasing cellobiose from the non-reducing ends of the chains.. It participates in glycan metabolism; beta-D-glucan degradation. Its pathway is glycan metabolism; cellulose degradation. With respect to regulation, slight activation by Mn(2+), Ni(2+) and K(+). Slight inhibition by Fe(3+), Zn(2+), Co(2+), Mg(2+), Cu(2+), Na(+) and NH4(+). In terms of biological role, has high beta-D-glucosidase, exoglucanase, beta-D-xylosidase, beta-D-galactosidase, and transgalactosylation activities in vitro. Has a very broad substrate specificity with the highest activity with p-nitrophenyl beta-D-galactopyranoside (pNPGal) as substrate. Active with pNP-beta-D-glucopyranoside (pNPGlu), pNP-beta-D-cellobioside (pNPC), lactose, pNP-beta-D-xylopyranoside (pNPX) and cellobiose in the order of decreasing activity, respectively. Very low activity with soluble polysaccharides synanthrin and locust bean gum. Very low, but detectable activity with insoluble substrates such as cotton and filter paper. No activity with pNP-alpha-L-arabinofuranoside (pNPAr) or carboxymethylcellulose (CMC) as substrates. Synthesizes galactooligosaccharides (GalOS) from lactose. Hydrolyzes pretreated corn stover releasing both glucose and xylose. This multifunctional enzyme may provide C.owensensis the benefit of utilizing a wide variety of available carbon sources in its natural growing environment as the ability to convert a wide range of soluble oligosaccharides to monoses is required in order to assimilate them. This Caldicellulosiruptor owensensis (strain ATCC 700167 / DSM 13100 / OL) protein is Multifunctional glycoside hydrolase.